Here is a 163-residue protein sequence, read N- to C-terminus: Large ribosomal subunit protein uL22c (163 aa).

It belongs to the universal ribosomal protein uL22 family. Part of the 50S ribosomal subunit.

It localises to the plastid. Its subcellular location is the chloroplast. In terms of biological role, this protein binds specifically to 23S rRNA. Functionally, the globular domain of the protein is located near the polypeptide exit tunnel on the outside of the subunit, while an extended beta-hairpin is found that lines the wall of the exit tunnel in the center of the 70S ribosome. The polypeptide is Large ribosomal subunit protein uL22c (rpl22) (Lobularia maritima (Sweet alyssum)).